A 73-amino-acid chain; its full sequence is Translation initiation factor IF-1 (73 aa).

The S1-like domain occupies 1-73 (MSEKEAGIEV…TRGRITYRDK (73 aa)).

It belongs to the IF-1 family. Component of the 30S ribosomal translation pre-initiation complex which assembles on the 30S ribosome in the order IF-2 and IF-3, IF-1 and N-formylmethionyl-tRNA(fMet); mRNA recruitment can occur at any time during PIC assembly.

Its subcellular location is the cytoplasm. Functionally, one of the essential components for the initiation of protein synthesis. Stabilizes the binding of IF-2 and IF-3 on the 30S subunit to which N-formylmethionyl-tRNA(fMet) subsequently binds. Helps modulate mRNA selection, yielding the 30S pre-initiation complex (PIC). Upon addition of the 50S ribosomal subunit IF-1, IF-2 and IF-3 are released leaving the mature 70S translation initiation complex. The chain is Translation initiation factor IF-1 from Anaeromyxobacter sp. (strain Fw109-5).